Reading from the N-terminus, the 810-residue chain is F-BAR domain only protein 2 (810 aa).

Residues Met3–Leu250 form the F-BAR domain. The interval Met3–Asp274 is mediates dimerization and binding to membranes enriched in Pi(4,5)-P2 and induces their tubulation. Positions His87–Glu156 form a coiled coil. A Glycyl lysine isopeptide (Lys-Gly) (interchain with G-Cter in SUMO2) cross-link involves residue Lys297. The disordered stretch occupies residues Asp301–Pro352. Ser312 is modified (phosphoserine). Thr385 is subject to Phosphothreonine. Phosphoserine is present on residues Ser387, Ser394, and Ser403. Residues Asn404–Leu537 are disordered. The span at Pro433 to Ser456 shows a compositional bias: low complexity. Phosphoserine is present on residues Ser488, Ser493, Ser496, Ser508, Ser510, Ser511, and Ser533. A compositionally biased stretch (low complexity) spans Pro502–Ala521. A mediates interaction with DAB2, EPS15, EPS15R and ITSN1 region spans residues Ala521–Cys810. Positions Thr542 to Asp809 constitute an MHD domain.

The protein belongs to the FCHO family. In terms of assembly, homodimer; disulfide-linked. May form homotetramer. Interacts with AP2A1. Interacts with EPS15, EPS15R, ITSN1 and ITSN2; recruit those scaffolding proteins which in turn may interact with the adaptor protein complex AP-2 at the plasma membrane. Interacts with DAB2 (via DPF motifs); mediates LDL receptor/LDLR endocytosis. Ubiquitinated. Mainly undergoes monoubiquitination but also polyubiquitination.

Its subcellular location is the membrane. The protein resides in the clathrin-coated pit. Functions in an early step of clathrin-mediated endocytosis. Has both a membrane binding/bending activity and the ability to recruit proteins essential to the formation of functional clathrin-coated pits. Has a lipid-binding activity with a preference for membranes enriched in phosphatidylserine and phosphoinositides (Pi(4,5) biphosphate) like the plasma membrane. Its membrane-bending activity might be important for the subsequent action of clathrin and adaptors in the formation of clathrin-coated vesicles. Involved in adaptor protein complex AP-2-dependent endocytosis of the transferrin receptor, it also functions in the AP-2-independent endocytosis of the LDL receptor. The polypeptide is F-BAR domain only protein 2 (FCHO2) (Homo sapiens (Human)).